The chain runs to 160 residues: SsrA-binding protein (160 aa).

The tract at residues 130–160 (LAKGKKKHDKRADQKEQDWQRQKQRLMKHKV) is disordered. The segment covering 139–150 (KRADQKEQDWQR) has biased composition (basic and acidic residues). Basic residues predominate over residues 151-160 (QKQRLMKHKV).

Belongs to the SmpB family.

It is found in the cytoplasm. Its function is as follows. Required for rescue of stalled ribosomes mediated by trans-translation. Binds to transfer-messenger RNA (tmRNA), required for stable association of tmRNA with ribosomes. tmRNA and SmpB together mimic tRNA shape, replacing the anticodon stem-loop with SmpB. tmRNA is encoded by the ssrA gene; the 2 termini fold to resemble tRNA(Ala) and it encodes a 'tag peptide', a short internal open reading frame. During trans-translation Ala-aminoacylated tmRNA acts like a tRNA, entering the A-site of stalled ribosomes, displacing the stalled mRNA. The ribosome then switches to translate the ORF on the tmRNA; the nascent peptide is terminated with the 'tag peptide' encoded by the tmRNA and targeted for degradation. The ribosome is freed to recommence translation, which seems to be the essential function of trans-translation. This Alkalilimnicola ehrlichii (strain ATCC BAA-1101 / DSM 17681 / MLHE-1) protein is SsrA-binding protein.